An 855-amino-acid chain; its full sequence is Protein translocase subunit SecA (855 aa).

ATP-binding positions include Q88, G106–T110, and D509. The segment at E815–G837 is disordered. Zn(2+) contacts are provided by C832, C834, C843, and C844.

The protein belongs to the SecA family. As to quaternary structure, monomer and homodimer. Part of the essential Sec protein translocation apparatus which comprises SecA, SecYEG and auxiliary proteins SecDF-YajC and YidC. It depends on Zn(2+) as a cofactor.

The protein resides in the cell inner membrane. It localises to the cytoplasm. It catalyses the reaction ATP + H2O + cellular proteinSide 1 = ADP + phosphate + cellular proteinSide 2.. Part of the Sec protein translocase complex. Interacts with the SecYEG preprotein conducting channel. Has a central role in coupling the hydrolysis of ATP to the transfer of proteins into and across the cell membrane, serving as an ATP-driven molecular motor driving the stepwise translocation of polypeptide chains across the membrane. The sequence is that of Protein translocase subunit SecA from Campylobacter fetus subsp. fetus (strain 82-40).